Reading from the N-terminus, the 80-residue chain is Acyl carrier protein (80 aa).

Residues 4–79 enclose the Carrier domain; that stretch reads EAILEKVRSI…DAVKYIEDKQ (76 aa). Residue serine 39 is modified to O-(pantetheine 4'-phosphoryl)serine.

This sequence belongs to the acyl carrier protein (ACP) family. In terms of processing, 4'-phosphopantetheine is transferred from CoA to a specific serine of apo-ACP by AcpS. This modification is essential for activity because fatty acids are bound in thioester linkage to the sulfhydryl of the prosthetic group.

It localises to the cytoplasm. The protein operates within lipid metabolism; fatty acid biosynthesis. Its function is as follows. Carrier of the growing fatty acid chain in fatty acid biosynthesis. The polypeptide is Acyl carrier protein (Parasynechococcus marenigrum (strain WH8102)).